Reading from the N-terminus, the 131-residue chain is Proline-rich protein 3 (131 aa).

The segment at 1-77 (LHRGPPGSRG…KEQRNPRRLK (77 aa)) is disordered. A compositionally biased stretch (pro residues) spans 12-25 (MIPPLLSLPPPPRG). The span at 28-44 (PLRGGLGPRSGPYGRGW) shows a compositional bias: gly residues. A C3H1-type zinc finger spans residues 98–126 (KSDRPVCRHFAKKGHCRYEDLCAFYHPGA).

In Sus scrofa (Pig), this protein is Proline-rich protein 3 (PRR3).